A 451-amino-acid polypeptide reads, in one-letter code: MLRTRLTNCSLWRPYYTSSLSRVPRAPPDKVLGLSEHFKKVKNVNKIDLTVGIYKDGWGKVTTFPSVAKAQKLIESHLELNKNLSYLPITGSKEFQENVMKFLFKESCPQFGPFYLAHDRISFVQTLSGTGALAVAAKFLALFISRDIWIPDPSWANHKNIFQNNGFENIYRYSYYKDGQIDIDGWIEQLKTFAYNNQQENNKNPPCIILHACCHNPTGLDPTKEQWEKIIDTIYELKMVPIVDMAYQGLESGNLLKDAYLLRLCLNVNKYPNWSNGIFLCQSFAKNMGLYGERVGSLSVITPATANNGKFNPLQQKNSLQQNIDSQLKKIVRGMYSSPPGYGSRVVNVVLSDFKLKQQWFKDVDFMVQRLHHVRQEMFDRLGWPDLVNFAQQHGMFYYTRFSPKQVEILRNNYFVYLTGDGRLSLSGVNDSNVDYLCESLEAVSKMDKLA.

Residues G52, W155, and N216 each contribute to the L-aspartate site. K286 is modified (N6-(pyridoxal phosphate)lysine). R423 contributes to the L-aspartate binding site.

The protein belongs to the class-I pyridoxal-phosphate-dependent aminotransferase family. In terms of assembly, homodimer. The cofactor is pyridoxal 5'-phosphate.

It is found in the mitochondrion matrix. It carries out the reaction L-aspartate + 2-oxoglutarate = oxaloacetate + L-glutamate. Its function is as follows. Plays a key role in amino acid metabolism. Important for metabolite exchange between mitochondria and cytosol. This Saccharomyces cerevisiae (strain ATCC 204508 / S288c) (Baker's yeast) protein is Aspartate aminotransferase, mitochondrial (AAT1).